The chain runs to 436 residues: MGQVLPLVTRQGDRIAIVSGLRTPFARQATAFHGIPAVDLGKMVVGELLARSEIPAEVIEQLVFGQVVQMPEAPNIAREIVLGTGMNVHTDAYSVSRACATSFQAVANVAESLMAGTIRAGIAGGADSSSVLPIGVSKKLAHVLVDVNKARTMSQRLKLFSRLRLRDLMPVPPAVAEYSTGLRMGDTAEQMAKTYGITREQQDALAHRSHQRAAQAWSDGKLKEEVMTAFIPPYKQPLVEDNNIRGNSSLADYAKLRPAFDRKHGTVTAANSTPLTDGAAAVILMTESRAKELGLVPLGYLRSYAFTAIDVWQDMLLGPARSTPLALERAGLTMSELTLIDMHEAFAAQTLANIQLLGSERFAREVLGRAHATGEVDDSKFNVLGGSIAYGHPFAATGARMITQTLHELRRRGGGFGLVTACAAGGLGAAMVLEAE.

Catalysis depends on cysteine 99, which acts as the Acyl-thioester intermediate. Catalysis depends on proton acceptor residues histidine 392 and cysteine 422.

This sequence belongs to the thiolase-like superfamily. Thiolase family. In terms of assembly, heterotetramer of two alpha chains (FadJ) and two beta chains (FadI).

The protein localises to the cytoplasm. The catalysed reaction is an acyl-CoA + acetyl-CoA = a 3-oxoacyl-CoA + CoA. The protein operates within lipid metabolism; fatty acid beta-oxidation. Catalyzes the final step of fatty acid oxidation in which acetyl-CoA is released and the CoA ester of a fatty acid two carbons shorter is formed. This is 3-ketoacyl-CoA thiolase from Shigella flexneri serotype 5b (strain 8401).